Consider the following 167-residue polypeptide: Translationally-controlled tumor protein homolog (167 aa).

Positions 1 to 167 (MKLFTDIISN…WKDGLRETKI (167 aa)) constitute a TCTP domain.

This sequence belongs to the TCTP family.

It is found in the cytoplasm. The protein localises to the cytoskeleton. Functionally, involved in protein synthesis. Involved in microtubule stabilization. In Mycosarcoma maydis (Corn smut fungus), this protein is Translationally-controlled tumor protein homolog.